A 121-amino-acid chain; its full sequence is Putative iron-sulfur cluster insertion protein ErpA (121 aa).

Iron-sulfur cluster-binding residues include cysteine 49, cysteine 113, and cysteine 115.

Belongs to the HesB/IscA family. In terms of assembly, homodimer. The cofactor is iron-sulfur cluster.

Its function is as follows. Required for insertion of 4Fe-4S clusters. This is Putative iron-sulfur cluster insertion protein ErpA from Paracidovorax citrulli (strain AAC00-1) (Acidovorax citrulli).